Here is a 533-residue protein sequence, read N- to C-terminus: MPATMSQAFIGNFLGNSPKWYKTAILSFLIINPLLFFYVDPFVAGWVLVLEFIFTLAMALKCYPLQPGGLLAIEAVAIGMTSASQVLHEIEANLEVLLLLVFMVAGIYFMKQLLLFGFTKIITKVRSKVLVSLMFCLASAFLSAFLDALTVIAVIIAVAVGFYSIYHKVASGKDFGADHDHTSEGKNAAGEDQLNEEELGAFRGFLRNLLMHAGVGTALGGVCTMVGEPQNLIIAAQANWQFGEFAVRMSPVTVPVLISGILTCYLVEKFGIFGYGAKLPTAVHRILCEYAAHEDARRTNKDNMKLIVQALVGVWLIAGLALHLASVGLIGLSVIILTTAFNGVTDEHALGKAFEEALPFTALLAVFFAVVGVIIDQHLFAPVIQWALGYEGNTQLVIFYIANGLLSMVSDNVFVGTVYINEVKAALINGQITRDQFDLLAVAINTGTNLPSVATPNGQAAFLFLLTSALAPLIRLSYGRMVWMALPYTIVLSIVGVMAIQTGFLEQATQYFYDSHTIIHHSAKEVLGTVSGH.

A run of 10 helical transmembrane segments spans residues 28-50 (FLIINPLLFFYVDPFVAGWVLVL), 67-87 (PGGLLAIEAVAIGMTSASQVL), 96-116 (VLLLLVFMVAGIYFMKQLLLF), 131-165 (VSLMFCLASAFLSAFLDALTVIAVIIAVAVGFYSI), 254-274 (VPVLISGILTCYLVEKFGIFG), 316-336 (LIAGLALHLASVGLIGLSVII), 364-384 (LAVFFAVVGVIIDQHLFAPVI), 396-416 (LVIFYIANGLLSMVSDNVFVG), 454-474 (ATPNGQAAFLFLLTSALAPLI), and 481-501 (MVWMALPYTIVLSIVGVMAIQ).

It belongs to the NhaB Na(+)/H(+) (TC 2.A.34) antiporter family.

It localises to the cell inner membrane. It carries out the reaction 2 Na(+)(in) + 3 H(+)(out) = 2 Na(+)(out) + 3 H(+)(in). Functionally, na(+)/H(+) antiporter that extrudes sodium in exchange for external protons. In Shewanella baltica (strain OS195), this protein is Na(+)/H(+) antiporter NhaB.